A 180-amino-acid chain; its full sequence is Protein GrpE (180 aa).

It belongs to the GrpE family. Homodimer.

The protein localises to the cytoplasm. Its function is as follows. Participates actively in the response to hyperosmotic and heat shock by preventing the aggregation of stress-denatured proteins, in association with DnaK and GrpE. It is the nucleotide exchange factor for DnaK and may function as a thermosensor. Unfolded proteins bind initially to DnaJ; upon interaction with the DnaJ-bound protein, DnaK hydrolyzes its bound ATP, resulting in the formation of a stable complex. GrpE releases ADP from DnaK; ATP binding to DnaK triggers the release of the substrate protein, thus completing the reaction cycle. Several rounds of ATP-dependent interactions between DnaJ, DnaK and GrpE are required for fully efficient folding. This chain is Protein GrpE, found in Picrophilus torridus (strain ATCC 700027 / DSM 9790 / JCM 10055 / NBRC 100828 / KAW 2/3).